Reading from the N-terminus, the 282-residue chain is MTAQLIDGNALSRQLRTEVAARTAALKDRGITPGLAVVLVGDNPASQVYVRNKVKACEDVGFHSVLEKYDASMTEEQLLARVQALNNDPSIHGILVQLPLPKHIDDHKVIEAISPLKDVDGFHVASAGALMVGQVGFKACTPYGCMKMLESIGMKDLRGKHAVVIGRSNIVGKPMAMMLLAANATVTVCHSGTADLAAMTRQADVVVAAVGKRNVLTADMVKPGAVVIDVGMNRNDEGKLCGDVDFEGVKQVAGYITPVPGGVGPMTITMLLVNTLEAAERL.

NADP(+) is bound by residues 166-168 (GRS) and S191.

The protein belongs to the tetrahydrofolate dehydrogenase/cyclohydrolase family. Homodimer.

It carries out the reaction (6R)-5,10-methylene-5,6,7,8-tetrahydrofolate + NADP(+) = (6R)-5,10-methenyltetrahydrofolate + NADPH. The enzyme catalyses (6R)-5,10-methenyltetrahydrofolate + H2O = (6R)-10-formyltetrahydrofolate + H(+). It functions in the pathway one-carbon metabolism; tetrahydrofolate interconversion. Functionally, catalyzes the oxidation of 5,10-methylenetetrahydrofolate to 5,10-methenyltetrahydrofolate and then the hydrolysis of 5,10-methenyltetrahydrofolate to 10-formyltetrahydrofolate. The polypeptide is Bifunctional protein FolD (Acidovorax sp. (strain JS42)).